Consider the following 91-residue polypeptide: C-C motif chemokine 5 (91 aa).

A signal peptide spans 1-23; it reads MKVSAATFAILLATATFRAPASA. Intrachain disulfides connect Cys-33–Cys-57 and Cys-34–Cys-73.

It belongs to the intercrine beta (chemokine CC) family.

The protein localises to the secreted. Functionally, chemoattractant for blood monocytes, memory T-helper cells and eosinophils. Causes the release of histamine from basophils and activates eosinophils. May activate several chemokine receptors including CCR1, CCR3, CCR4 and CCR5. May also be an agonist of the G protein-coupled receptor GPR75. Together with GPR75, may play a role in neuron survival through activation of a downstream signaling pathway involving the PI3, Akt and MAP kinases. By activating GPR75 may also play a role in insulin secretion by islet cells. This Canis lupus familiaris (Dog) protein is C-C motif chemokine 5 (CCL5).